We begin with the raw amino-acid sequence, 271 residues long: Dermonecrotic toxin LhSicTox-alphaIA2aiv (271 aa).

H3 is an active-site residue. Mg(2+) contacts are provided by E23 and D25. H39 (nucleophile) is an active-site residue. 2 cysteine pairs are disulfide-bonded: C43–C49 and C45–C188. D83 is a Mg(2+) binding site.

This sequence belongs to the arthropod phospholipase D family. Class II subfamily. The cofactor is Mg(2+). In terms of tissue distribution, expressed by the venom gland.

Its subcellular location is the secreted. The enzyme catalyses an N-(acyl)-sphingosylphosphocholine = an N-(acyl)-sphingosyl-1,3-cyclic phosphate + choline. It carries out the reaction an N-(acyl)-sphingosylphosphoethanolamine = an N-(acyl)-sphingosyl-1,3-cyclic phosphate + ethanolamine. It catalyses the reaction a 1-acyl-sn-glycero-3-phosphocholine = a 1-acyl-sn-glycero-2,3-cyclic phosphate + choline. The catalysed reaction is a 1-acyl-sn-glycero-3-phosphoethanolamine = a 1-acyl-sn-glycero-2,3-cyclic phosphate + ethanolamine. In terms of biological role, dermonecrotic toxins cleave the phosphodiester linkage between the phosphate and headgroup of certain phospholipids (sphingolipid and lysolipid substrates), forming an alcohol (often choline) and a cyclic phosphate. This toxin acts on sphingomyelin (SM). It may also act on ceramide phosphoethanolamine (CPE), lysophosphatidylcholine (LPC) and lysophosphatidylethanolamine (LPE), but not on lysophosphatidylserine (LPS), and lysophosphatidylglycerol (LPG). It acts by transphosphatidylation, releasing exclusively cyclic phosphate products as second products. Induces dermonecrosis, hemolysis, increased vascular permeability, edema, inflammatory response, and platelet aggregation. This is Dermonecrotic toxin LhSicTox-alphaIA2aiv from Loxosceles hirsuta (Recluse spider).